The chain runs to 224 residues: PHD finger-containing protein 5 (224 aa).

The segment at 31 to 81 (KKPCEVCGSDANELLMMTCFMCRDTREHTYCARVMFQRVPRLWICEECRDF) adopts a PHD-type zinc-finger fold. Residues Cys-34, Cys-37, Cys-49, Cys-52, His-58, Cys-61, Cys-75, and Cys-78 each coordinate Zn(2+). Positions 116-137 (PRTNQVVDNHQDPPIDQTDPSS) are disordered.

In terms of assembly, interacts directly with AIPP3/BDT1.

In terms of biological role, together with AIPP3/BDT1, cooperates to form a BAH-PHD bivalent histone reader complex able to read histone H3 lysine 27 trimethylation (H3K27me3) histone marks in order to regulate transcription, especially to prevent early flowering; promotes AIPP3/BDT1 binding to H3K27me3. The sequence is that of PHD finger-containing protein 5 from Arabidopsis thaliana (Mouse-ear cress).